The primary structure comprises 471 residues: Protein hedgehog (471 aa).

The N-palmitoyl cysteine moiety is linked to residue cysteine 85. 7 residues coordinate Ca(2+): glutamate 149, glutamate 150, aspartate 155, threonine 185, glutamate 186, aspartate 189, and aspartate 191. The Cholesterol glycine ester moiety is linked to residue glycine 257.

This sequence belongs to the hedgehog family. As to quaternary structure, interacts with shf. Interacts with ptc and CG5504/l(2)tid. In terms of processing, the C-terminal part of the hedgehog protein precursor displays an autoproteolysis activity that results in the cleavage of the full-length protein into two parts (N-product and C-product). In addition, the C-terminal part displays a cholesterol transferase activity that results by the covalent attachment of a cholesterol moiety to the C-terminal of the newly generated N-product. The N-product is the active species in both local and long-range signaling, whereas the C-product has no signaling activity. Post-translationally, cholesterylation is required for N-product targeting to lipid rafts and multimerization. N-palmitoylation by Rasp of the hedgehog N-product, within the secretory pathway, is required for the embryonic and larval patterning activities of the hedgehog signal. In embryos, expression starts at stage 5 as a few stripes at the anterior and posterior ends, this expands to 17 stripes during stages 8-11. Expression is also seen in CNS and some PNS cells until stage 13-14, and in foregut, hindgut and salivary glands. In larvae, expression is seen in the posterior compartment of the wing, leg and antennal imaginal disks. In adults, high level of expression in specific regions of the proventriculus and hindgut, with slightly lower levels of expression in the posterior midgut. Relatively low levels of expression in the anterior midgut region.

Its subcellular location is the nucleus. The protein resides in the cytoplasm. It localises to the cell membrane. It carries out the reaction glycyl-L-cysteinyl-[protein] + cholesterol + H(+) = [protein]-C-terminal glycyl cholesterol ester + N-terminal L-cysteinyl-[protein]. Functionally, the C-terminal part of the hedgehog protein precursor displays an autoproteolysis activity that results in the cleavage of the full-length protein into two parts (N-product and C-product). In addition, the C-terminal part displays a cholesterol transferase activity that results by the covalent attachment of a cholesterol moiety to the C-terminal of the newly generated N-product. Once cleaved, the C-product has no signaling activity and diffuses from the cell. Its function is as follows. The dually lipidated hedgehog protein N-product is a morphogen which is essential for a variety of patterning events during development. Establishes the anterior-posterior axis of the embryonic segments and patterns the larval imaginal disks. Binds to the patched (ptc) receptor, which functions in association with smoothened (smo), to activate the transcription of target genes wingless (wg), decapentaplegic (dpp) and ptc. In the absence of hh, ptc represses the constitutive signaling activity of smo through fused (fu). Essential component of a signaling pathway which regulates the Duox-dependent gut immune response to bacterial uracil; required to activate Cad99C-dependent endosome formation, norpA-dependent Ca2+ mobilization and p38 MAPK, which are essential steps in the Duox-dependent production of reactive oxygen species (ROS) in response to intestinal bacterial infection. During photoreceptor differentiation, it up-regulates transcription of Ubr3, which in turn promotes the hh-signaling pathway by mediating the ubiquitination and degradation of cos. This Drosophila melanogaster (Fruit fly) protein is Protein hedgehog.